The following is a 181-amino-acid chain: Adenylate kinase (181 aa).

10 to 15 (GAGKGT) is a binding site for ATP. Residues 30–59 (STGELFRSNIENGTKLGLEAKRYLDAGDLV) form an NMP region. Residues Thr-31, Arg-36, 57-59 (DLV), 85-88 (GFPR), and Gln-92 each bind AMP. The segment at 126 to 132 (ARGRADD) is LID. Arg-127 provides a ligand contact to ATP. Positions 129 and 140 each coordinate AMP. Gly-166 contributes to the ATP binding site.

The protein belongs to the adenylate kinase family. In terms of assembly, monomer.

The protein resides in the cytoplasm. The enzyme catalyses AMP + ATP = 2 ADP. It functions in the pathway purine metabolism; AMP biosynthesis via salvage pathway; AMP from ADP: step 1/1. Its function is as follows. Catalyzes the reversible transfer of the terminal phosphate group between ATP and AMP. Plays an important role in cellular energy homeostasis and in adenine nucleotide metabolism. This Mycolicibacterium paratuberculosis (strain ATCC BAA-968 / K-10) (Mycobacterium paratuberculosis) protein is Adenylate kinase.